The following is a 138-amino-acid chain: Small ribosomal subunit protein bS6 (138 aa).

A compositionally biased stretch (basic and acidic residues) spans 97-121; sequence TEQSEMLKAEENRSERRERRDRPDN. Residues 97–138 are disordered; it reads TEQSEMLKAEENRSERRERRDRPDNTDGSNENDSDSDNNADE. Residues 126 to 138 are compositionally biased toward acidic residues; sequence NENDSDSDNNADE.

Belongs to the bacterial ribosomal protein bS6 family.

Its function is as follows. Binds together with bS18 to 16S ribosomal RNA. This chain is Small ribosomal subunit protein bS6, found in Stutzerimonas stutzeri (strain A1501) (Pseudomonas stutzeri).